Reading from the N-terminus, the 338-residue chain is Nucleoid-associated protein CGSHiGG_07705 (338 aa).

The protein belongs to the YejK family.

It localises to the cytoplasm. Its subcellular location is the nucleoid. The polypeptide is Nucleoid-associated protein CGSHiGG_07705 (Haemophilus influenzae (strain PittGG)).